A 705-amino-acid polypeptide reads, in one-letter code: Dolichyl-diphosphooligosaccharide--protein glycosyltransferase subunit STT3A (705 aa).

Residues 1 to 17 (MTKFGFLRLSYEKQDTL) are Cytoplasmic-facing. A helical transmembrane segment spans residues 18 to 38 (LKLLILSMAAVLSFSTRLFAV). Residues 39-119 (LRFESVIHEF…IDIRNVCVFL (81 aa)) lie on the Lumenal side of the membrane. Positions 47-49 (EFD) match the DXD motif 1 motif. D49 is a Mn(2+) binding site. A helical transmembrane segment spans residues 120 to 138 (APLFSSFTTIVTYHLTKEL). Topologically, residues 139-140 (KD) are cytoplasmic. The helical transmembrane segment at 141 to 158 (AGAGLLAAAMIAVVPGYI) threads the bilayer. Topologically, residues 159–169 (SRSVAGSYDNE) are lumenal. Mn(2+)-binding residues include D167 and E169. The DXD motif 2 motif lies at 167–169 (DNE). Residues 170–189 (GIAIFCMLLTYYMWIKAVKT) form a helical membrane-spanning segment. Over 190–191 (GS) the chain is Cytoplasmic. The chain crosses the membrane as a helical span at residues 192 to 206 (ICWAAKCALAYFYMV). The Lumenal segment spans residues 207-211 (SSWGG). A helical membrane pass occupies residues 212–228 (YVFLINLIPLHVLVLML). The Cytoplasmic portion of the chain corresponds to 229-233 (TGRFS). The chain crosses the membrane as a helical span at residues 234 to 259 (HRIYVAYCTVYCLGTILSMQISFVGF). Residues 260 to 267 (QPVLSSEH) lie on the Lumenal side of the membrane. Residues 268–287 (MAAFGVFGLCQIHAFVDYLR) traverse the membrane as a helical segment. Residues 288-300 (SKLNPQQFEVLFR) lie on the Cytoplasmic side of the membrane. The helical transmembrane segment at 301–321 (SVISLVGFVLLTVGALLMLTG) threads the bilayer. Residues 322–356 (KISPWTGRFYSLLDPSYAKNNIPIIASVSEHQPTT) lie on the Lumenal side of the membrane. An SVSE motif motif is present at residues 348-351 (SVSE). A helical transmembrane segment spans residues 357-379 (WSSYYFDLQLLVFMFPVGLYYCF). At 380 to 385 (SNLSDA) the chain is on the cytoplasmic side. The chain crosses the membrane as a helical span at residues 386–402 (RIFIIMYGVTSMYFSAV). The Lumenal segment spans residues 403–406 (MVRL). R405 serves as a coordination point for dolichyl diphosphooligosaccharide. The chain crosses the membrane as a helical span at residues 407–428 (MLVLAPVMCILSGIGVSQVLST). Topologically, residues 429–453 (YMKNLDISRPDKKSKKQQDSTYPIK) are cytoplasmic. A helical membrane pass occupies residues 454 to 473 (NEVASGMILVMAFFLITYTF). Residues 474–705 (HSTWVTSEAY…DLDNRGLSRT (232 aa)) are Lumenal-facing. The segment at 525 to 527 (WWD) is interacts with target acceptor peptide in protein substrate. The WWDYG motif signature appears at 525 to 529 (WWDYG). A dolichyl diphosphooligosaccharide-binding site is contributed by Y530. N-linked (GlcNAc...) asparagine glycosylation is found at N537 and N544. N548 carries N-linked (GlcNAc...) (high mannose) asparagine glycosylation. The DK motif motif lies at 592–599 (DINKFLWM).

This sequence belongs to the STT3 family. As to quaternary structure, component of the oligosaccharyltransferase (OST) complex. There are 2 OST complexes, OST-A and OST-B, which contain STT3A or STT3B as catalytic subunit, respectively. OST-A and OST-B contain common core subunits RPN1, RPN2, OST48, OST4, DAD1 and TMEM258, and OST-A contains DC2/OSTC and KRTCAP2/KCP2 specific accessory subunits. OST-A complex assembly occurs through the formation of 3 subcomplexes. Subcomplex 1 contains RPN1 and TMEM258, subcomplex 2 contains the OST-A-specific subunits STT3A, DC2/OSTC, and KCP2 as well as the core subunit OST4, and subcomplex 3 contains RPN2, DAD1, and OST48. The OST-A complex can form stable complexes with the Sec61 complex or with both the Sec61 and TRAP complexes. Requires Mg(2+) as cofactor. Mn(2+) serves as cofactor. In terms of tissue distribution, expressed at high levels in placenta, liver, muscle and pancreas, and at very low levels in brain, lung and kidney. Expressed in skin fibroblasts (at protein level).

It is found in the endoplasmic reticulum. Its subcellular location is the endoplasmic reticulum membrane. The catalysed reaction is a di-trans,poly-cis-dolichyl diphosphooligosaccharide + L-asparaginyl-[protein] = N(4)-(oligosaccharide-(1-&gt;4)-N-acetyl-beta-D-glucosaminyl-(1-&gt;4)-N-acetyl-beta-D-glucosaminyl)-L-asparaginyl-[protein] + a di-trans,poly-cis-dolichyl diphosphate + H(+). Its pathway is protein modification; protein glycosylation. Its activity is regulated as follows. STT3A, but not STT3B, is specifically inhibited by the N-glycosylation inhibitor NGI-235, which prevents productive binding pose of the glycan donor in the active site of STT3A. Its function is as follows. Catalytic subunit of the oligosaccharyl transferase (OST) complex that catalyzes the initial transfer of a defined glycan (Glc(3)Man(9)GlcNAc(2) in eukaryotes) from the lipid carrier dolichol-pyrophosphate to an asparagine residue within an Asn-X-Ser/Thr consensus motif in nascent polypeptide chains, the first step in protein N-glycosylation. N-glycosylation occurs cotranslationally and the complex associates with the Sec61 complex at the channel-forming translocon complex that mediates protein translocation across the endoplasmic reticulum (ER). All subunits are required for a maximal enzyme activity. This subunit contains the active site and the acceptor peptide and donor lipid-linked oligosaccharide (LLO) binding pockets. STT3A is present in the majority of OST complexes and mediates cotranslational N-glycosylation of most sites on target proteins, while STT3B-containing complexes are required for efficient post-translational glycosylation and mediate glycosylation of sites that have been skipped by STT3A. STT3A-containing OST-A complex is also required to prevent hyperglycosylation of some target proteins by preventing glycosylation of facultative sites before folding of target proteins is completed. In Homo sapiens (Human), this protein is Dolichyl-diphosphooligosaccharide--protein glycosyltransferase subunit STT3A.